The chain runs to 219 residues: Lipoprotein-releasing system ATP-binding protein LolD (219 aa).

The ABC transporter domain occupies 5–219 (LKAGDIFKTY…KVVMQDGVII (215 aa)). 37 to 44 (GASGAGKS) provides a ligand contact to ATP.

Belongs to the ABC transporter superfamily. Lipoprotein translocase (TC 3.A.1.125) family. The complex is composed of two ATP-binding proteins (LolD) and two transmembrane proteins (LolC and LolE).

Its subcellular location is the cell inner membrane. Its function is as follows. Part of the ABC transporter complex LolCDE involved in the translocation of mature outer membrane-directed lipoproteins, from the inner membrane to the periplasmic chaperone, LolA. Responsible for the formation of the LolA-lipoprotein complex in an ATP-dependent manner. This is Lipoprotein-releasing system ATP-binding protein LolD from Cytophaga hutchinsonii (strain ATCC 33406 / DSM 1761 / CIP 103989 / NBRC 15051 / NCIMB 9469 / D465).